Consider the following 63-residue polypeptide: UPF0434 protein GDI0182/Gdia_2252 (63 aa).

Belongs to the UPF0434 family.

The protein is UPF0434 protein GDI0182/Gdia_2252 of Gluconacetobacter diazotrophicus (strain ATCC 49037 / DSM 5601 / CCUG 37298 / CIP 103539 / LMG 7603 / PAl5).